The chain runs to 774 residues: 5-methyltetrahydropteroyltriglutamate--homocysteine methyltransferase (774 aa).

5-methyltetrahydropteroyltri-L-glutamate is bound by residues 24–27 (RELK) and Lys120. L-homocysteine contacts are provided by residues 446–448 (IGS) and Glu499. L-methionine-binding positions include 446-448 (IGS) and Glu499. A 5-methyltetrahydropteroyltri-L-glutamate-binding site is contributed by Trp576. Asp614 lines the L-homocysteine pocket. An L-methionine-binding site is contributed by Asp614. Residue Glu620 coordinates 5-methyltetrahydropteroyltri-L-glutamate. Positions 656, 658, and 680 each coordinate Zn(2+). The active-site Proton donor is His709. Cys741 contributes to the Zn(2+) binding site.

The protein belongs to the vitamin-B12 independent methionine synthase family. The cofactor is Zn(2+).

It carries out the reaction 5-methyltetrahydropteroyltri-L-glutamate + L-homocysteine = tetrahydropteroyltri-L-glutamate + L-methionine. Its pathway is amino-acid biosynthesis; L-methionine biosynthesis via de novo pathway; L-methionine from L-homocysteine (MetE route): step 1/1. Catalyzes the transfer of a methyl group from 5-methyltetrahydrofolate to homocysteine resulting in methionine formation. The chain is 5-methyltetrahydropteroyltriglutamate--homocysteine methyltransferase from Streptomyces griseus subsp. griseus (strain JCM 4626 / CBS 651.72 / NBRC 13350 / KCC S-0626 / ISP 5235).